The following is a 244-amino-acid chain: Transcription factor Sox-12 (244 aa).

A disordered region spans residues 1–22; that stretch reads MVQNKTTGSCPKPTEVAPGGPS. Positions 31–99 form a DNA-binding region, HMG box; sequence IKRPMNAFMV…KHMADYPNYK (69 aa). Disordered regions lie at residues 101-137 and 152-193; these read RPRR…QMDT and GDQV…HEGL. 2 stretches are compositionally biased toward polar residues: residues 120-137 and 176-186; these read STAT…QMDT and HTKTVPSSPQS.

In terms of tissue distribution, expressed at a low level in embryos, and in the adult lung, ovary, skeletal muscle, testis, brain and heart.

It is found in the nucleus. Transcription factor that binds to the sequence 5'-AACAAT-3'. Acts as a transcriptional activator. The sequence is that of Transcription factor Sox-12 (sox12) from Xenopus laevis (African clawed frog).